Consider the following 526-residue polypeptide: pH-sensitive chloride channel 2 (526 aa).

The first 18 residues, 1–18, serve as a signal peptide directing secretion; the sequence is MDTLGIFVLISYLGLSSA. At 19–300 the chain is on the extracellular side; that stretch reads AGVHLGDLQQ…VLLTREVGYY (282 aa). Asn33, Asn42, Asn52, Asn192, Asn231, Asn264, Asn271, and Asn283 each carry an N-linked (GlcNAc...) asparagine glycan. The chain crosses the membrane as a helical span at residues 301-321; sequence VIDYFLPSIMIVTISWVSFWL. Topologically, residues 322-327 are cytoplasmic; the sequence is QADQTP. The helical transmembrane segment at 328–347 threads the bilayer; the sequence is ARTTLGCTTLLSFITLSLSQ. Topologically, residues 348-360 are extracellular; that stretch reads ENNLMKVSYVTMS. A helical transmembrane segment spans residues 361–381; that stretch reads EVWFLVCTIFIFGSLVEFAFV. Residues 382 to 505 are Cytoplasmic-facing; it reads NTIWRRNNDL…VSLWIDRKMR (124 aa). A disordered region spans residues 463–488; sequence ISLDEQDETSTSESSDSSKEKPAQTF. A helical transmembrane segment spans residues 506–526; sequence FVFPLSFIVFNALFWTLVYCL.

It belongs to the ligand-gated ion channel (TC 1.A.9) family. In third-instar larvae, expressed in the principal cells of the excretory Malpighian tubules (at protein level). Also detected in the enterocytes of the copper cell region and the iron cell region of the larval midgut (at protein level). In the copper cell region expression is confined to the interstitial cells and in the iron cell region it is expressed in the anterior portion (at protein level). Expressed in the Malpighian tubules and the middle midgut of third instar larvae and adults.

The protein localises to the apical cell membrane. Its subcellular location is the cell projection. The protein resides in the microvillus membrane. It localises to the late endosome membrane. It is found in the lysosome membrane. It carries out the reaction chloride(in) = chloride(out). Ligand and pH-gated channel that mediates chloride transport primarily in the mid-gut and thereby functions in larval metabolism and fluid homeostasis. Channel opening is triggered by zinc binding or, to a lesser extent, an increase in extracellular pH. Zinc-dependent activity in the mid-gut is required for modulating Tor-dependent metabolic programs that promote larval feeding and systematic growth. It may therefore act as an intestinal zinc sensor that mediates larval growth and metabolism in response to micronutrient availability. Activates Tor signaling via its activity in maintaining lysosome homeostasis in interstitial cells and/or by its role in activating the release of insulin-like peptides in the brain after feeding, via an unknown mechanism. Functions in lysosome homeostasis by regulating chloride transport into enterocyte lysosomes to sustain V-ATPase function which maintains lysosomal acidification and consequently promotes Tor activation at the lysosome membrane. Also appears to play a role in regulating fluid secretion and osmotic homeostasis in Malpighian tubules in response to the pH of extracellular urine. This function is important for proper urine production during diuresis. This Drosophila melanogaster (Fruit fly) protein is pH-sensitive chloride channel 2.